A 221-amino-acid chain; its full sequence is Glutathione peroxidase 6 (221 aa).

The first 19 residues, 1-19 (MFQQFQASCLVLFFLVGFA), serve as a signal peptide directing secretion. Residue Sec73 is part of the active site. A non-standard amino acid (selenocysteine) is located at residue Sec73.

The protein belongs to the glutathione peroxidase family. In terms of tissue distribution, expressed in olfactory epithelium and embryos.

The protein resides in the secreted. The catalysed reaction is 2 glutathione + H2O2 = glutathione disulfide + 2 H2O. The chain is Glutathione peroxidase 6 (GPX6) from Homo sapiens (Human).